The chain runs to 597 residues: Scarecrow-like protein 5 (597 aa).

Residues glutamate 111 to asparagine 172 are disordered. Residues asparagine 123–serine 169 are compositionally biased toward low complexity. The GRAS domain maps to serine 218 to arginine 597. The segment at glycine 225–serine 285 is leucine repeat I (LRI). Residues methionine 304–glycine 369 form a VHIID region. Residues valine 335–aspartate 339 carry the VHIID motif. The interval leucine 385 to lysine 417 is leucine repeat II (LRII). Residues leucine 426–asparagine 520 are PFYRE. Positions alanine 523–arginine 597 are SAW.

The protein belongs to the GRAS family. As to expression, expressed in seedlings, roots, shoots, leaves, flowers and siliques.

It is found in the nucleus. Its function is as follows. Probable transcription factor involved in plant development. This chain is Scarecrow-like protein 5 (SCL5), found in Arabidopsis thaliana (Mouse-ear cress).